The following is a 63-amino-acid chain: Kappa-theraphotoxin-Cg3a 1 (63 aa).

A signal peptide spans 1 to 21; it reads MKNTSILFILGLALLLVLAFE. A propeptide spanning residues 22–29 is cleaved from the precursor; sequence VQVGESDG. 3 disulfide bridges follow: Cys31–Cys46, Cys38–Cys51, and Cys45–Cys58.

This sequence belongs to the neurotoxin 10 (Hwtx-1) family. 44 (Jztx-4) subfamily. As to expression, expressed by the venom gland.

The protein localises to the secreted. Functionally, gating modifier of Kv2.1/KCNB1, Kv2.2/KCNB2 and Kv4.3/KCND3 channels. This Chilobrachys guangxiensis (Chinese earth tiger tarantula) protein is Kappa-theraphotoxin-Cg3a 1.